A 215-amino-acid chain; its full sequence is Calcium-binding protein 7 (215 aa).

Residues 1 to 188 (MPFHPVTAAL…QIRQTCVRKS (188 aa)) lie on the Cytoplasmic side of the membrane. EF-hand domains follow at residues 33–68 (DELE…LGYM) and 69–104 (PNEV…KLST). Ca(2+) is bound by residues Asp-46, Asp-48, Asn-50, Glu-57, Asp-82, Asp-84, Asp-86, Gln-88, and Glu-93. A helical; Anchor for type IV membrane protein transmembrane segment spans residues 189–209 (LICAFAIAFIISVMLIAANQV). At 210–215 (LRSGMK) the chain is on the extracellular side.

In terms of assembly, interacts with PI4KB. This binding competes with FREQ/NCS1 binding in a calcium-dependent manner.

The protein resides in the golgi apparatus. The protein localises to the trans-Golgi network membrane. It localises to the cytoplasm. Its subcellular location is the perinuclear region. It is found in the cell membrane. Functionally, negatively regulates Golgi-to-plasma membrane trafficking by interacting with PI4KB and inhibiting its activity. This Homo sapiens (Human) protein is Calcium-binding protein 7 (CABP7).